A 166-amino-acid polypeptide reads, in one-letter code: Large ribosomal subunit protein uL10 (166 aa).

It belongs to the universal ribosomal protein uL10 family. In terms of assembly, part of the ribosomal stalk of the 50S ribosomal subunit. The N-terminus interacts with L11 and the large rRNA to form the base of the stalk. The C-terminus forms an elongated spine to which L12 dimers bind in a sequential fashion forming a multimeric L10(L12)X complex.

Functionally, forms part of the ribosomal stalk, playing a central role in the interaction of the ribosome with GTP-bound translation factors. This Bacillus licheniformis (strain ATCC 14580 / DSM 13 / JCM 2505 / CCUG 7422 / NBRC 12200 / NCIMB 9375 / NCTC 10341 / NRRL NRS-1264 / Gibson 46) protein is Large ribosomal subunit protein uL10.